The following is a 259-amino-acid chain: Short-chain dehydrogenase chry4 (259 aa).

Residues R37, D55, N81, Y154, K158, V185, and T187 each coordinate NADP(+). The active-site Proton donor is Y154. The active-site Lowers pKa of active site Tyr is the K158.

Belongs to the short-chain dehydrogenases/reductases (SDR) family.

It functions in the pathway pigment biosynthesis. Functionally, short-chain dehydrogenase; part of the gene cluster that mediates the biosynthesis of the yellow pigment chrysogine. Pyruvic acid and anthranilic acid are likely substrates for the nonribosomal peptide synthetase chry1/NRPS14, with pyruvic acid adenylated by the first A domain and anthranilic acid by the second. If pyruvic acid and anthranilic acid are merged and released from chry1/NRPS14 by hydrolysis, a subsequent amidation would lead to 2-pyruvoylaminobenzamide. This process is probably catalyzed by the amidotransferase chry2 using glutamine as amino donor. The dehydrogenase chry5 that has a terminal berberine bridge domain for C-N cyclization could catalyze the cyclization of 2-pyruvoylaminobenzamide to yield acetyl-4(3H)-quinazolidinone. A final reduction of acetyl-4(3H)-quinazolidinone catalyzed by the oxidoreductase chry4 would result in chrysogine. This Gibberella zeae (strain ATCC MYA-4620 / CBS 123657 / FGSC 9075 / NRRL 31084 / PH-1) (Wheat head blight fungus) protein is Short-chain dehydrogenase chry4.